Consider the following 307-residue polypeptide: Aspartate carbamoyltransferase catalytic subunit (307 aa).

Carbamoyl phosphate-binding residues include Arg49 and Thr50. Lys77 serves as a coordination point for L-aspartate. Arg99, His127, and Gln130 together coordinate carbamoyl phosphate. The L-aspartate site is built by Arg160 and Arg211. Ala250 and Pro251 together coordinate carbamoyl phosphate.

The protein belongs to the aspartate/ornithine carbamoyltransferase superfamily. ATCase family. Heterododecamer (2C3:3R2) of six catalytic PyrB chains organized as two trimers (C3), and six regulatory PyrI chains organized as three dimers (R2).

The catalysed reaction is carbamoyl phosphate + L-aspartate = N-carbamoyl-L-aspartate + phosphate + H(+). Its pathway is pyrimidine metabolism; UMP biosynthesis via de novo pathway; (S)-dihydroorotate from bicarbonate: step 2/3. Its function is as follows. Catalyzes the condensation of carbamoyl phosphate and aspartate to form carbamoyl aspartate and inorganic phosphate, the committed step in the de novo pyrimidine nucleotide biosynthesis pathway. This chain is Aspartate carbamoyltransferase catalytic subunit, found in Bacillus pumilus (strain SAFR-032).